A 374-amino-acid chain; its full sequence is Probable dual-specificity RNA methyltransferase RlmN (374 aa).

The segment covering 1-17 (MEKNEISEERRTQEKEK) has biased composition (basic and acidic residues). A disordered region spans residues 1–22 (MEKNEISEERRTQEKEKQHGHR). Catalysis depends on glutamate 119, which acts as the Proton acceptor. Residues 125–360 (SEERITACIS…VTVRKSQGAT (236 aa)) enclose the Radical SAM core domain. Cysteine 132 and cysteine 365 form a disulfide bridge. Residues cysteine 139, cysteine 143, and cysteine 146 each coordinate [4Fe-4S] cluster. S-adenosyl-L-methionine contacts are provided by residues 190–191 (GE), serine 223, 246–248 (SLH), and asparagine 322. Catalysis depends on cysteine 365, which acts as the S-methylcysteine intermediate.

This sequence belongs to the radical SAM superfamily. RlmN family. Requires [4Fe-4S] cluster as cofactor.

The protein localises to the cytoplasm. The enzyme catalyses adenosine(2503) in 23S rRNA + 2 reduced [2Fe-2S]-[ferredoxin] + 2 S-adenosyl-L-methionine = 2-methyladenosine(2503) in 23S rRNA + 5'-deoxyadenosine + L-methionine + 2 oxidized [2Fe-2S]-[ferredoxin] + S-adenosyl-L-homocysteine. It carries out the reaction adenosine(37) in tRNA + 2 reduced [2Fe-2S]-[ferredoxin] + 2 S-adenosyl-L-methionine = 2-methyladenosine(37) in tRNA + 5'-deoxyadenosine + L-methionine + 2 oxidized [2Fe-2S]-[ferredoxin] + S-adenosyl-L-homocysteine. In terms of biological role, specifically methylates position 2 of adenine 2503 in 23S rRNA and position 2 of adenine 37 in tRNAs. This Chlorobaculum tepidum (strain ATCC 49652 / DSM 12025 / NBRC 103806 / TLS) (Chlorobium tepidum) protein is Probable dual-specificity RNA methyltransferase RlmN.